The primary structure comprises 101 residues: Small ribosomal subunit protein uS14m (101 aa).

It belongs to the universal ribosomal protein uS14 family. Component of the mitochondrial ribosome small subunit (28S) which comprises a 12S rRNA and about 30 distinct proteins. Interacts with LIAT1.

It is found in the mitochondrion. This is Small ribosomal subunit protein uS14m (mrps14) from Dictyostelium discoideum (Social amoeba).